We begin with the raw amino-acid sequence, 150 residues long: uncharacterized protein (150 aa).

An N-terminal signal peptide occupies residues 1–22; that stretch reads MVIALKRFSFLASIATLTVLNA. Residue Cys-23 is the site of N-palmitoyl cysteine attachment. A lipid anchor (S-diacylglycerol cysteine) is attached at Cys-23.

This sequence belongs to the MG067/MG068/MG395 family.

It localises to the cell membrane. This is an uncharacterized protein from Mycoplasma pneumoniae (strain ATCC 29342 / M129 / Subtype 1) (Mycoplasmoides pneumoniae).